We begin with the raw amino-acid sequence, 206 residues long: Type III pantothenate kinase (206 aa).

Residue 5–12 participates in ATP binding; it reads DIGNTFLH. Residues tyrosine 69 and 73–76 contribute to the substrate site; that span reads GVDR. Aspartate 75 (proton acceptor) is an active-site residue. Aspartate 90 provides a ligand contact to K(+). Serine 93 contacts ATP. Threonine 145 is a substrate binding site.

This sequence belongs to the type III pantothenate kinase family. As to quaternary structure, homodimer. Requires NH4(+) as cofactor. K(+) serves as cofactor.

Its subcellular location is the cytoplasm. The catalysed reaction is (R)-pantothenate + ATP = (R)-4'-phosphopantothenate + ADP + H(+). The protein operates within cofactor biosynthesis; coenzyme A biosynthesis; CoA from (R)-pantothenate: step 1/5. Its function is as follows. Catalyzes the phosphorylation of pantothenate (Pan), the first step in CoA biosynthesis. The polypeptide is Type III pantothenate kinase (Helicobacter hepaticus (strain ATCC 51449 / 3B1)).